Here is a 557-residue protein sequence, read N- to C-terminus: Dihydroxy-acid dehydratase 2 (557 aa).

A [2Fe-2S] cluster-binding site is contributed by C50. D82 contributes to the Mg(2+) binding site. C123 contacts [2Fe-2S] cluster. The Mg(2+) site is built by D124 and K125. K125 bears the N6-carboxylysine mark. C195 is a [2Fe-2S] cluster binding site. Position 447 (E447) interacts with Mg(2+). Catalysis depends on S473, which acts as the Proton acceptor.

This sequence belongs to the IlvD/Edd family. Homodimer. The cofactor is [2Fe-2S] cluster. Mg(2+) is required as a cofactor.

The enzyme catalyses (2R)-2,3-dihydroxy-3-methylbutanoate = 3-methyl-2-oxobutanoate + H2O. The catalysed reaction is (2R,3R)-2,3-dihydroxy-3-methylpentanoate = (S)-3-methyl-2-oxopentanoate + H2O. The protein operates within amino-acid biosynthesis; L-isoleucine biosynthesis; L-isoleucine from 2-oxobutanoate: step 3/4. It participates in amino-acid biosynthesis; L-valine biosynthesis; L-valine from pyruvate: step 3/4. In terms of biological role, functions in the biosynthesis of branched-chain amino acids. Catalyzes the dehydration of (2R,3R)-2,3-dihydroxy-3-methylpentanoate (2,3-dihydroxy-3-methylvalerate) into 2-oxo-3-methylpentanoate (2-oxo-3-methylvalerate) and of (2R)-2,3-dihydroxy-3-methylbutanoate (2,3-dihydroxyisovalerate) into 2-oxo-3-methylbutanoate (2-oxoisovalerate), the penultimate precursor to L-isoleucine and L-valine, respectively. This is Dihydroxy-acid dehydratase 2 from Burkholderia lata (strain ATCC 17760 / DSM 23089 / LMG 22485 / NCIMB 9086 / R18194 / 383).